Reading from the N-terminus, the 371-residue chain is Flagellar P-ring protein (371 aa).

The signal sequence occupies residues 1 to 25 (MTMRVCKWLLTFALLFAATLTPAHS).

It belongs to the FlgI family. The basal body constitutes a major portion of the flagellar organelle and consists of four rings (L,P,S, and M) mounted on a central rod.

It is found in the periplasm. The protein localises to the bacterial flagellum basal body. Its function is as follows. Assembles around the rod to form the L-ring and probably protects the motor/basal body from shearing forces during rotation. This chain is Flagellar P-ring protein, found in Sinorhizobium fredii (strain NBRC 101917 / NGR234).